Consider the following 933-residue polypeptide: Myocardin (933 aa).

The MEF2C-binding motif lies at 12 to 27 (IRSKFRSVLQLRLQQR). RPEL repeat units follow at residues 18 to 43 (SVLQ…PPLR), 62 to 87 (DTLK…QASS), and 106 to 131 (DDLN…PVDC). Residues 153–205 (FEEDSSSDGLSPDQTRSEDLPGSAGSPLDTKAAETPLAGPRGTVQDLTLGSEN) are HDAC5-binding. Disordered stretches follow at residues 154–282 (EEDS…PPPM) and 324–365 (NEQM…GPLP). The segment covering 210-220 (SAPQSGNQSDL) has biased composition (polar residues). Positions 248-265 (NRHKKPKDPKPKVKKLKY) are enriched in basic residues. Over residues 330–346 (NPNSSSAPLSSTPLSPA) the composition is skewed to low complexity. Residues 347 to 357 (KNSFSGQTGVS) show a composition bias toward polar residues. In terms of domain architecture, SAP spans 368 to 402 (LDDLKVSELRQQLRIRGLPVSGTKTALMDRLRPFQ). Phosphoserine; by GSK3-beta is present on residues S445, S449, S453, and S457. Residues 515–550 (LVEKQKVINELTWKLQQEQRQVEELRMQLQKQKRGT) adopt a coiled-coil conformation. A disordered region spans residues 568–613 (DAGSSCPFAPLPRAVKRQSNSSEEQPAAGDAARLRPLGNTHCAESS). Phosphoserine; by GSK3-beta occurs at positions 621, 625, 629, and 633. Disordered regions lie at residues 630 to 672 (PQHS…VSSP) and 760 to 794 (PKIP…FDHY). The interval 712-933 (ITQPPSYEDA…SPMDLHLQQW (222 aa)) is required for interaction with and ubiquitination by STUB1. S810, S857, and S864 each carry phosphoserine; by MAPK1 and MAPK3. T891 is subject to Phosphothreonine; by MAPK1 and MAPK3.

In terms of assembly, homodimer. Interacts with MLLT7/FOXO4. Interacts with SRF, its association does not depend on specific DNA sequences for ternary complex formation. Interacts (via C-terminal) with EP300 (via the CREB-binding domain). Interacts with HDAC4 and HDAC5. Interacts with MEF2C. Interacts (via C-terminus) with STUB1/CHIP. Interacts with PURB. Ubiquitinated; by STUB1/CHIP at the C-terminus, leading to its degradation by the proteasome. Phosphorylation by GSK3B is required for STUB1/CHIP-mediated ubiquitination. Post-translationally, phosphorylation negatively regulates the intrinsic myocardin transcriptional activity. Phosphorylated; by GSK3B. In terms of tissue distribution, expressed in the heart and in smooth muscle cells-containing tissues (aorta, pulmonary vein, lung), but is not detectable in skeletal muscle, liver, kidney and spleen.

It localises to the nucleus. Its function is as follows. Smooth muscle cells (SM) and cardiac muscle cells-specific transcriptional factor which uses the canonical single or multiple CArG boxes DNA sequence. Acts as a cofactor of serum response factor (SRF) with the potential to modulate SRF-target genes. Plays a crucial role in cardiogenesis, urinary bladder development, and differentiation of the smooth muscle cell lineage (myogenesis). Positively regulates the transcription of genes involved in vascular smooth muscle contraction. The protein is Myocardin (MYOCD) of Sus scrofa (Pig).